The sequence spans 417 residues: Tryptophan synthase beta chain (417 aa).

Position 110 is an N6-(pyridoxal phosphate)lysine (Lys110).

The protein belongs to the TrpB family. Tetramer of two alpha and two beta chains. Pyridoxal 5'-phosphate serves as cofactor.

It catalyses the reaction (1S,2R)-1-C-(indol-3-yl)glycerol 3-phosphate + L-serine = D-glyceraldehyde 3-phosphate + L-tryptophan + H2O. It participates in amino-acid biosynthesis; L-tryptophan biosynthesis; L-tryptophan from chorismate: step 5/5. The beta subunit is responsible for the synthesis of L-tryptophan from indole and L-serine. The polypeptide is Tryptophan synthase beta chain (Prochlorococcus marinus (strain NATL2A)).